A 742-amino-acid polypeptide reads, in one-letter code: Synaptic vesicle glycoprotein 2A (742 aa).

Residues 1-57 (MEEGFRDRAAFIRGAKDIAKEVKKHAAKKVVKGLDRVQDEYSRRSYSRFEEEDDDDD) are interaction with SYT1. At 1-169 (MEEGFRDRAA…GHGRFQWTLY (169 aa)) the chain is on the cytoplasmic side. Residues 33 to 49 (GLDRVQDEYSRRSYSRF) are compositionally biased toward basic and acidic residues. A disordered region spans residues 33–144 (GLDRVQDEYS…GRGEAQRRKE (112 aa)). Phosphoserine is present on residues Ser80 and Ser81. A Phosphothreonine modification is found at Thr84. Over residues 122–137 (VRGGLSDGEGPPGGRG) the composition is skewed to gly residues. Residue Ser127 is modified to Phosphoserine. A helical membrane pass occupies residues 170–190 (FVLGLALMADGVEVFVVGFVL). Residues 191-205 (PSAEKDMCLSDSNKG) lie on the Extracellular side of the membrane. Residues 206–226 (MLGLIVYLGMMVGAFLWGGLA) form a helical membrane-spanning segment. Residues 227 to 233 (DRLGRRQ) lie on the Cytoplasmic side of the membrane. Residues 234–254 (CLLISLSVNSVFAFFSSFVQG) form a helical membrane-spanning segment. Topologically, residues 255 to 262 (YGTFLFCR) are extracellular. The chain crosses the membrane as a helical span at residues 263–283 (LLSGVGIGGSIPIVFSYFSEF). The Cytoplasmic segment spans residues 284 to 294 (LAQEKRGEHLS). The helical transmembrane segment at 295–315 (WLCMFWMIGGVYAAAMAWAII) threads the bilayer. The Extracellular segment spans residues 316–334 (PHYGWSFQMGSAYQFHSWR). Residues 335–355 (VFVLVCAFPSVFAIGALTTQP) traverse the membrane as a helical segment. The Cytoplasmic portion of the chain corresponds to 356 to 447 (ESPRFFLENG…CFGPEYRRIT (92 aa)). Ser393 bears the Phosphoserine mark. The chain crosses the membrane as a helical span at residues 448-468 (LMMMGVWFTMSFSYYGLTVWF). Residues 469–598 (PDMIRHLQAV…GTGEGAYMVY (130 aa)) are Extracellular-facing. At Tyr480 the chain carries Phosphotyrosine. N-linked (GlcNAc...) asparagine glycosylation is found at Asn498, Asn548, and Asn573. The helical transmembrane segment at 599–619 (FVSFLGTLAVLPGNIVSALLM) threads the bilayer. The Cytoplasmic segment spans residues 620-626 (DKIGRLR). Residues 627–647 (MLAGSSVMSCVSCFFLSFGNS) form a helical membrane-spanning segment. Residues 648 to 651 (ESAM) lie on the Extracellular side of the membrane. A helical membrane pass occupies residues 652-672 (IALLCLFGGVSIASWNALDVL). At 673–690 (TVGLYPSDKRTTAFGFLN) the chain is on the cytoplasmic side. Residues 691–711 (ALCKLAAVLGISIFTSFVGIT) form a helical membrane-spanning segment. Position 712 (Lys712) is a topological domain, extracellular. A helical membrane pass occupies residues 713 to 733 (AAPIPFASAALALGSSLALKL). The Cytoplasmic portion of the chain corresponds to 734 to 742 (PETRGQVLQ).

It belongs to the major facilitator superfamily. As to quaternary structure, interacts with SYT1/synaptotagmin-1 in a calcium-dependent manner. Binds the adapter protein complex AP-2. Phosphorylation by CK1 of the N-terminal cytoplasmic domain regulates interaction with SYT1. In terms of processing, N-glycosylated.

It localises to the presynapse. It is found in the cytoplasmic vesicle. Its subcellular location is the secretory vesicle. The protein resides in the synaptic vesicle membrane. Functionally, plays a role in the control of regulated secretion in neural and endocrine cells, enhancing selectively low-frequency neurotransmission. Positively regulates vesicle fusion by maintaining the readily releasable pool of secretory vesicles. In Macaca fascicularis (Crab-eating macaque), this protein is Synaptic vesicle glycoprotein 2A (SV2A).